The sequence spans 286 residues: Bifunctional protein FolD (286 aa).

NADP(+) contacts are provided by residues 164 to 166, Ser193, and Ile234; that span reads GRS.

This sequence belongs to the tetrahydrofolate dehydrogenase/cyclohydrolase family. As to quaternary structure, homodimer.

It catalyses the reaction (6R)-5,10-methylene-5,6,7,8-tetrahydrofolate + NADP(+) = (6R)-5,10-methenyltetrahydrofolate + NADPH. It carries out the reaction (6R)-5,10-methenyltetrahydrofolate + H2O = (6R)-10-formyltetrahydrofolate + H(+). It functions in the pathway one-carbon metabolism; tetrahydrofolate interconversion. Catalyzes the oxidation of 5,10-methylenetetrahydrofolate to 5,10-methenyltetrahydrofolate and then the hydrolysis of 5,10-methenyltetrahydrofolate to 10-formyltetrahydrofolate. In Maridesulfovibrio salexigens (strain ATCC 14822 / DSM 2638 / NCIMB 8403 / VKM B-1763) (Desulfovibrio salexigens), this protein is Bifunctional protein FolD.